A 284-amino-acid chain; its full sequence is GPN-loop GTPase 3 (284 aa).

Residue 13-18 (GSGKST) participates in GTP binding. The Gly-Pro-Asn (GPN)-loop; involved in dimer interface motif lies at 72 to 74 (GPN). 174–177 (TKMD) is a binding site for GTP. The disordered stretch occupies residues 261-284 (KEPKEHEEESSSMFDEYFQERQNE).

This sequence belongs to the GPN-loop GTPase family. In terms of assembly, heterodimer with GPN1. Binds to RNA polymerase II (RNAPII). Interacts directly with subunits RPB4 and RPB7 and the CTD of RPB1.

Functionally, small GTPase required for proper localization of RNA polymerase II (RNAPII). May act at an RNAP assembly step prior to nuclear import. This chain is GPN-loop GTPase 3, found in Rattus norvegicus (Rat).